We begin with the raw amino-acid sequence, 598 residues long: Fumarate reductase flavoprotein subunit (598 aa).

FAD-binding positions include 12-16 (GAGGA), 36-38 (ISK), 44-52 (SHTVAAEGG), 156-158 (HFV), and D212. H45 carries the tele-8alpha-FAD histidine modification. Catalysis depends on residues H233 and R249. FAD is bound by residues 356-357 (HY), E380, and 391-397 (RLGSNSL). The tract at residues 577–598 (AKRVYGGEATAQDKQNKEKANG) is disordered.

The protein belongs to the FAD-dependent oxidoreductase 2 family. FRD/SDH subfamily. Part of an enzyme complex containing four subunits: a flavoprotein (FrdA), an iron-sulfur protein (FrdB), and two hydrophobic anchor proteins (FrdC and FrdD). The cofactor is FAD.

The protein localises to the cell inner membrane. It carries out the reaction a quinone + succinate = fumarate + a quinol. The catalysed reaction is a menaquinone + succinate = a menaquinol + fumarate. Two distinct, membrane-bound, FAD-containing enzymes are responsible for the catalysis of fumarate and succinate interconversion; the fumarate reductase is used in anaerobic growth, and the succinate dehydrogenase is used in aerobic growth. The protein is Fumarate reductase flavoprotein subunit (frdA) of Proteus vulgaris.